The primary structure comprises 409 residues: uncharacterized protein (409 aa).

Residues 1–209 (MRVFVARQPI…GHDLSTHFYS (209 aa)) enclose the EAL domain. Residues 203–392 (LSTHFYSYYE…GNQLDKEEAY (190 aa)) form the HDOD domain.

This is an uncharacterized protein from Bacillus subtilis (strain 168).